A 273-amino-acid chain; its full sequence is MSRIAERFRACRSAGRTALIPYITGGDPSPDDTVRLMHALVAGGADVIEIGVPFSDPMADGPVIQAACARALAAGTTPARLFEVVRRFREEDPDTPVVFMGYANILEAAGYRAFVRDAAAAGVDGLLTVDLPPEEAGALADEARVQGVDLIYLVAPNTSAERVERVCSVAGGFVYAVALKGVTGSADLDAGLVGQQVAGIRRVTDLPVAVGFGVRDPQSAAALAPCADGVIVGSALVRMIGEHGAAADLPERLRDAVLALRRAMDDTTTGGDS.

Catalysis depends on proton acceptor residues E49 and D60.

This sequence belongs to the TrpA family. In terms of assembly, tetramer of two alpha and two beta chains.

The catalysed reaction is (1S,2R)-1-C-(indol-3-yl)glycerol 3-phosphate + L-serine = D-glyceraldehyde 3-phosphate + L-tryptophan + H2O. The protein operates within amino-acid biosynthesis; L-tryptophan biosynthesis; L-tryptophan from chorismate: step 5/5. Functionally, the alpha subunit is responsible for the aldol cleavage of indoleglycerol phosphate to indole and glyceraldehyde 3-phosphate. The protein is Tryptophan synthase alpha chain of Halorhodospira halophila (strain DSM 244 / SL1) (Ectothiorhodospira halophila (strain DSM 244 / SL1)).